The sequence spans 274 residues: MGMKFFNPVTPSSRGTVLVSKVGLSKDEPEKSLTSGKKSSGGRNNHGRITTRHRGGGHKKKYRVIDFKRNRSGQGIVEKIEYDPNRSGFLALISYKEDDIKSYILAPQGMKPGDVVTAGNDADILPGNCLLLKHIPVGSFVHNVELKPGNGAAIARAAGCYAQIVGRDGQYVLLRLRSGQIRLILSSCKATIGVVSNPDHKNRKLGKAGRSRWLGIRPTVRGIAMNPVDHPHGGGEGKTSGGRHPVTPWGVATKGKKTRRRNKSSDKYIKQLKG.

2 disordered regions span residues 21-59 and 224-274; these read KVGLSKDEPEKSLTSGKKSSGGRNNHGRITTRHRGGGHK and AMNP…QLKG. The span at 32 to 42 shows a compositional bias: low complexity; that stretch reads SLTSGKKSSGG. The span at 45 to 59 shows a compositional bias: basic residues; that stretch reads NHGRITTRHRGGGHK. A compositionally biased stretch (basic and acidic residues) spans 263 to 274; that stretch reads KSSDKYIKQLKG.

The protein belongs to the universal ribosomal protein uL2 family. Part of the 50S ribosomal subunit. Forms a bridge to the 30S subunit in the 70S ribosome.

In terms of biological role, one of the primary rRNA binding proteins. Required for association of the 30S and 50S subunits to form the 70S ribosome, for tRNA binding and peptide bond formation. It has been suggested to have peptidyltransferase activity; this is somewhat controversial. Makes several contacts with the 16S rRNA in the 70S ribosome. In Wolbachia pipientis wMel, this protein is Large ribosomal subunit protein uL2.